The sequence spans 98 residues: NADH-ubiquinone oxidoreductase chain 4L (98 aa).

The next 3 membrane-spanning stretches (helical) occupy residues 1–21 (MSMVYINIFLAFILSLMGMLV), 29–49 (SLLCLEGMMLSLFVMMSVTIL), and 61–81 (IVLLVFAACEAALGLSLLVMV).

The protein belongs to the complex I subunit 4L family. Core subunit of respiratory chain NADH dehydrogenase (Complex I) which is composed of 45 different subunits.

Its subcellular location is the mitochondrion inner membrane. It catalyses the reaction a ubiquinone + NADH + 5 H(+)(in) = a ubiquinol + NAD(+) + 4 H(+)(out). In terms of biological role, core subunit of the mitochondrial membrane respiratory chain NADH dehydrogenase (Complex I) which catalyzes electron transfer from NADH through the respiratory chain, using ubiquinone as an electron acceptor. Part of the enzyme membrane arm which is embedded in the lipid bilayer and involved in proton translocation. The sequence is that of NADH-ubiquinone oxidoreductase chain 4L (MT-ND4L) from Vulpes vulpes (Red fox).